The following is a 131-amino-acid chain: Ponticulin-like protein M (131 aa).

Positions 1–19 are cleaved as a signal peptide; the sequence is MKFLSTLILLLSVLALVRG. Serine 106 carries the GPI-like-anchor amidated serine lipid modification. Positions 107 to 131 are cleaved as a propeptide — removed in mature form; that stretch reads NSASSPLTTAVLFVVAFAAAIALLL.

It belongs to the ponticulin family. Post-translationally, the GPI-like-anchor contains a phosphoceramide group, rather than a phosphatidyl group.

It localises to the cell membrane. In terms of biological role, binds F-actin and nucleates actin assembly. The protein is Ponticulin-like protein M (ponM) of Dictyostelium discoideum (Social amoeba).